The chain runs to 292 residues: MASSEVFTSEEAAQRAIKTYYESQESRMGYELVFGGTQHFGYYTPGTWSPFPIDKSLRRMEEKLMGWLALPAGSRILEAGCGVGHVALYLAKHGMRVTGVDIIDHHVEQARRSAQKANLPKDQIVIEKMDFERLEAIPSASHDGAFTMQSLGHAFSAEKALAGFFRVLKPGGRFALVEVERRPNAEADKKNPRLTEQLSMINVGTGMPTNERSHDGFYKGLLEEAGFVDIESRDISDNILPVVRMFYVVLLVPYLFVRLLGIEKHFVSMLAGTAGYVGYDRWRFMVVTGRKP.

A helical transmembrane segment spans residues 240-262; the sequence is LPVVRMFYVVLLVPYLFVRLLGI.

The protein belongs to the class I-like SAM-binding methyltransferase superfamily. Erg6/SMT family. S-adenosyl-L-methionine serves as cofactor.

It is found in the membrane. It catalyses the reaction 3-[(2E,4E,8S,10E,12Z)-4,8-dimethyltetradeca-2,4,10,12-tetraenoyl]-4-hydroxy-5-(4-hydroxyphenyl)-1,2-dihydropyridin-2-one = 8-epi-ilicicolin H. The protein operates within mycotoxin biosynthesis. In terms of biological role, S-adenosyl-l-methionine-dependent Diels-Alderase; part of the gene cluster that mediates the biosynthesis of ilicicolin H, a 4-hydroxy-2-pyridonealkaloid that has potent and broad antifungal activities by inhibiting the mitochondrial respiration chain. IccD catalyzes the Diels-Alder reaction that converts the acyclic 2-pyridone intermediate to 8-epi-ilicicolin H. The biosynthesis of ilicicolin H starts with formation of the tetramic acid by the hybrid PKS-NRPS synthetase iccA with the partnering trans-enoyl reductase iccB since iccA lacks a designated enoylreductase (ER) domain. The cytochrome P450 monooxygenase iccC then catalyzes the ring expansion of the tetramate to the acyclic 2-pyridone. The pericyclase iccD further converts the acyclic 2-pyridone into 8-epi-ilicicolin H. Finally, the epimerase iccE converts 8-epi-ilicicolin H into ilicicolin H via epimerization. IccA to iccE are sufficient for ilicicolin H biosynthesis and the roles of the remaining enzymes, iccF, iccG and iccH within the pathway have still to be determined. The protein is S-adenosyl-L-methionine-dependent Diels-Alderase iccD of Talaromyces variabilis (Penicillium variabile).